The following is a 353-amino-acid chain: Lysophosphatidic acid receptor 3 (353 aa).

The Extracellular segment spans residues 1 to 31 (MNECHYDKHMDFFYNRSNTDTVDDWTGTKLV). N15 is a glycosylation site (N-linked (GlcNAc...) asparagine). Residues 32 to 52 (IVLCVGTFFCLFIFFSNSLVI) traverse the membrane as a helical segment. Residues 53 to 67 (AAVIKNRKFHFPFYY) are Cytoplasmic-facing. Residues 68–88 (LLANLAAADFFAGIAYVFLMF) form a helical membrane-spanning segment. At 89-101 (NTGPVSKTLTVNR) the chain is on the extracellular side. A helical membrane pass occupies residues 102-124 (WFLRQGLLDSSLTASLTNLLVIA). The Cytoplasmic segment spans residues 125-146 (VERHMSIMRMRVHSNLTKKRVT). The chain crosses the membrane as a helical span at residues 147 to 167 (LLILLVWAIAIFMGAVPTLGW). At 168–186 (NCLCNISACSSLAPIYSRS) the chain is on the extracellular side. An N-linked (GlcNAc...) asparagine glycan is attached at N172. Residues 187–207 (YLVFWTVSNLMAFLIMVVVYL) traverse the membrane as a helical segment. Residues 208–240 (RIYVYVKRKTNVLSPHTSGSISRRRTPMKLMKT) are Cytoplasmic-facing. Residues 241–261 (VMTVLGAFVVCWTPGLVVLLL) traverse the membrane as a helical segment. Residues 262–276 (DGLNCRQCGVQHVKR) are Extracellular-facing. The helical transmembrane segment at 277-297 (WFLLLALLNSVVNPIIYSYKD) threads the bilayer. Residues 298–353 (EDMYGTMKKMICCFSQENPERRPSRIPSTVLSRSDTGSQYIEDSISQGAVCNKSTS) are Cytoplasmic-facing. Residue C309 is the site of S-palmitoyl cysteine attachment.

The protein belongs to the G-protein coupled receptor 1 family. In terms of tissue distribution, most abundantly expressed in prostate, testes, pancreas, and heart, with moderate levels in lung and ovary. No detectable expression in brain, placenta, liver, skeletal muscle, kidney, spleen, thymus, small intestine, colon, or peripheral blood leukocytes.

It localises to the cell membrane. Functionally, receptor for lysophosphatidic acid (LPA), a mediator of diverse cellular activities. May play a role in the development of ovarian cancer. Seems to be coupled to the G(i)/G(o) and G(q) families of heteromeric G proteins. This is Lysophosphatidic acid receptor 3 (LPAR3) from Homo sapiens (Human).